The chain runs to 131 residues: Small ribosomal subunit protein uS11 (131 aa).

This sequence belongs to the universal ribosomal protein uS11 family. In terms of assembly, part of the 30S ribosomal subunit. Interacts with proteins S7 and S18. Binds to IF-3.

Located on the platform of the 30S subunit, it bridges several disparate RNA helices of the 16S rRNA. Forms part of the Shine-Dalgarno cleft in the 70S ribosome. In Paramagnetospirillum magneticum (strain ATCC 700264 / AMB-1) (Magnetospirillum magneticum), this protein is Small ribosomal subunit protein uS11.